Consider the following 382-residue polypeptide: S-adenosylmethionine decarboxylase proenzyme (382 aa).

F32 is a binding site for substrate. Residues E33 and E36 contribute to the active site. L87 contacts substrate. S90 functions as the Schiff-base intermediate with substrate; via pyruvic acid in the catalytic mechanism. Pyruvic acid (Ser); by autocatalysis is present on S90. C104 serves as the catalytic Proton donor; for catalytic activity. F248 is a binding site for substrate. Catalysis depends on proton acceptor; for processing activity residues S254 and H267. Position 271 (E271) interacts with substrate.

The protein belongs to the eukaryotic AdoMetDC family. Heterotetramer of two alpha and two beta chains. Requires pyruvate as cofactor. Is synthesized initially as an inactive proenzyme. Formation of the active enzyme involves a self-maturation process in which the active site pyruvoyl group is generated from an internal serine residue via an autocatalytic post-translational modification. Two non-identical subunits are generated from the proenzyme in this reaction, and the pyruvate is formed at the N-terminus of the alpha chain, which is derived from the carboxyl end of the proenzyme. The post-translation cleavage follows an unusual pathway, termed non-hydrolytic serinolysis, in which the side chain hydroxyl group of the serine supplies its oxygen atom to form the C-terminus of the beta chain, while the remainder of the serine residue undergoes an oxidative deamination to produce ammonia and the pyruvoyl group blocking the N-terminus of the alpha chain.

The enzyme catalyses S-adenosyl-L-methionine + H(+) = S-adenosyl 3-(methylsulfanyl)propylamine + CO2. It functions in the pathway amine and polyamine biosynthesis; S-adenosylmethioninamine biosynthesis; S-adenosylmethioninamine from S-adenosyl-L-methionine: step 1/1. The protein is S-adenosylmethionine decarboxylase proenzyme of Leishmania donovani.